The following is a 707-amino-acid chain: Zinc finger CCHC domain-containing protein 8 (707 aa).

At alanine 2 the chain carries N-acetylalanine. A disordered region spans residues 16–44 (FDHPEESIPKPVHTRFKDDDGDEEDENGV). Residues 34-43 (DDGDEEDENG) are compositionally biased toward acidic residues. Residues 45–80 (GDAELRERLRQCEETIEQLRAENQELKRKLNILTRP) adopt a coiled-coil conformation. A CCHC-type zinc finger spans residues 227 to 244 (PHCFNCGSEEHQMKDCPM). RBM7 binding regions lie at residues 286-299 (FKPG…QDAL) and 309-324 (FIYR…GWLK). Threonine 342 is subject to Phosphothreonine. Disordered stretches follow at residues 409 to 518 (APGV…LTLE), 531 to 607 (LEQA…TSLC), and 641 to 660 (QKLF…HSPI). Residue lysine 413 forms a Glycyl lysine isopeptide (Lys-Gly) (interchain with G-Cter in SUMO2) linkage. A compositionally biased stretch (low complexity) spans 456-465 (SQSSESFQFQ). The segment covering 466–496 (PPLPPDTPPLPRGTPPPVFTPPLPKGTPPLT) has biased composition (pro residues). Phosphothreonine occurs at positions 472, 479, and 485. Threonine 492 carries the phosphothreonine; by GSK3 modification. Residues 516–539 (TLEELEEQQRRIWAALEQAESVNS) adopt a coiled-coil conformation. Residues 549–559 (LTGNSVASSPC) show a composition bias toward polar residues. Threonine 577 carries the post-translational modification Phosphothreonine. The residue at position 598 (serine 598) is a Phosphoserine. Positions 598–607 (SPDSEVTSLC) are enriched in polar residues. Phosphothreonine is present on threonine 648. Phosphoserine is present on residues serine 649, serine 658, and serine 695. Residues 659-707 (PIPDMSKFATGITPFEFENMAESTGMYLRIRSLLKNSPRNQQKNKKASE) are MTREX binding.

The protein belongs to the ZCCHC8 family. As to quaternary structure, component of a nuclear TRAMP-like complex, an ATP-dependent exosome regulatory complex consisting of a helicase (MTREX), an oligadenylate polymerase (TENT4B or TENT4A), and a substrate specific RNA-binding factor (ZCCHC7 or ZCCHC8). Several TRAMP-like complexes exist with specific compositions and are associated with nuclear, or nucleolar RNA exosomes. Identified in the spliceosome C complex. Component of the nuclear exosome targeting (NEXT) complex composed of MTREX, ZCCHC8, and RBM7 that directs a subset of non-coding short-lived RNAs for exosomal degradation. Interacts with proteins involved in RNA processing and degradation such as MTREX and RBM7; interaction with MTREX enhances MTREX RNA helicase activity and bridges between RBM7 and MTREX. Interacts with TERC, the telomerase RNA component. Post-translationally, phosphorylation at Thr-492 by GSK3 is triggered in cells entering mitosis; this phosphorylation is greatly enhanced by nocodazole treatment, but reduced by lithium.

The protein resides in the nucleus. It localises to the nucleoplasm. Scaffolding subunit of the trimeric nuclear exosome targeting (NEXT) complex that is involved in the surveillance and turnover of aberrant transcripts and non-coding RNAs. NEXT functions as an RNA exosome cofactor that directs a subset of non-coding short-lived RNAs for exosomal degradation. May be involved in pre-mRNA splicing. It is required for 3'-end maturation of telomerase RNA component (TERC), TERC 3'-end targeting to the nuclear RNA exosome, and for telomerase function. The chain is Zinc finger CCHC domain-containing protein 8 (ZCCHC8) from Homo sapiens (Human).